A 556-amino-acid polypeptide reads, in one-letter code: Threonylcarbamoyladenosine tRNA methylthiotransferase (556 aa).

Residues 17-57 are disordered; that stretch reads SATDPKPHDRQSARKNIVPRARKRNKNNIQEEEPPADSTIP. The region spanning 60–168 is the MTTase N-terminal domain; it reads QKIWIRTWGC…VVEVVEETIK (109 aa). Positions 69, 105, 134, 210, 214, and 217 each coordinate [4Fe-4S] cluster. A Radical SAM core domain is found at 196–427; it reads RKNPLIEIIS…QLFHSYDPYD (232 aa). The region spanning 427–489 is the TRAM domain; that stretch reads DHKIGQKQQV…KHFMKGQPVQ (63 aa). Residues 536–556 form a helical membrane-spanning segment; the sequence is VFLFLTALLAAVIAFVGTKLV.

Belongs to the methylthiotransferase family. CDKAL1 subfamily. The cofactor is [4Fe-4S] cluster.

It is found in the endoplasmic reticulum membrane. It carries out the reaction N(6)-L-threonylcarbamoyladenosine(37) in tRNA + (sulfur carrier)-SH + AH2 + 2 S-adenosyl-L-methionine = 2-methylsulfanyl-N(6)-L-threonylcarbamoyladenosine(37) in tRNA + (sulfur carrier)-H + 5'-deoxyadenosine + L-methionine + A + S-adenosyl-L-homocysteine + 2 H(+). In terms of biological role, catalyzes the methylthiolation of N6-threonylcarbamoyladenosine (t(6)A), leading to the formation of 2-methylthio-N6-threonylcarbamoyladenosine (ms(2)t(6)A) at position 37 in tRNAs that read codons beginning with adenine. The polypeptide is Threonylcarbamoyladenosine tRNA methylthiotransferase (cdkal1) (Xenopus laevis (African clawed frog)).